A 447-amino-acid polypeptide reads, in one-letter code: uncharacterized protein (447 aa).

The next 12 membrane-spanning stretches (helical) occupy residues 17–37 (IMMMALGGAIGAGLFKGSSSA), 40–60 (VAGPSVIIAYLLGGIILLFIM), 95–115 (IYWKMWVLNIAAEAVVAAIFI), 118–138 (WLPGCPIWVLALGISLIVTIV), 154–174 (AMIKITVIIIFIILGLLLLFV), 200–220 (GLITAMLVVIYSYGGTEIIGV), 243–263 (IVAFYLLPFFIIVSLIPWNQV), 289–311 (AVILLAIISSMNSGLYGSSRILY), 333–353 (MFAILMCTSSLYIGVLISLFA), 361–381 (LMGSLGYTVLFIWLIIGFAHL), 393–415 (YYVKWFPYTTWFAIVALLAILIG), and 419–441 (TTSIVITGITAAIYLLITVAYLV).

Belongs to the amino acid-polyamine-organocation (APC) superfamily.

It localises to the cell membrane. May participate in leucine metabolism. May transport leucine or a compound related to leucine metabolism. This is an uncharacterized protein from Bacillus subtilis (strain 168).